The primary structure comprises 435 residues: Glutamate-1-semialdehyde 2,1-aminomutase (435 aa).

Lysine 266 bears the N6-(pyridoxal phosphate)lysine mark.

Belongs to the class-III pyridoxal-phosphate-dependent aminotransferase family. HemL subfamily. As to quaternary structure, homodimer. It depends on pyridoxal 5'-phosphate as a cofactor.

It is found in the cytoplasm. It catalyses the reaction (S)-4-amino-5-oxopentanoate = 5-aminolevulinate. Its pathway is porphyrin-containing compound metabolism; protoporphyrin-IX biosynthesis; 5-aminolevulinate from L-glutamyl-tRNA(Glu): step 2/2. The polypeptide is Glutamate-1-semialdehyde 2,1-aminomutase (Coxiella burnetii (strain CbuK_Q154) (Coxiella burnetii (strain Q154))).